The sequence spans 1012 residues: Structural polyprotein (1012 aa).

Residue Asp-30 participates in a divalent metal cation binding. Positions 514 to 755 constitute a Peptidase S50 domain; sequence ADKGYEVVAN…AGRQFHLALA (242 aa). Ser-653 acts as the Nucleophile in catalysis. Residue Lys-692 is part of the active site. The tract at residues 972–1012 is disordered; it reads MKHRNPRRAPPKPKPKPNAPSQRPPGRLGRWIRTVSDEDLE. The segment covering 975–986 has biased composition (basic residues); the sequence is RNPRRAPPKPKP. The interaction with VP1 protein stretch occupies residues 1003 to 1012; the sequence is IRTVSDEDLE.

As to quaternary structure, homotrimer. A central divalent metal stabilizes the VP2 trimer. Interacts with host ITGA4/ITGB1. In terms of assembly, homodimer. Interacts (via C-terminus) with VP1 in the cytoplasm. Interacts with VP2. Specific enzymatic cleavages yield mature proteins. The capsid assembly seems to be regulated by polyprotein processing. The protease VP4 cleaves itself off the polyprotein, thus releasing pre-VP2 and VP3 within the infected cell. During capsid assembly, the C-terminus of pre-VP2 is further processed by VP4, giving rise to VP2, the external capsid protein and three small peptides that all stay closely associated with the capsid.

The protein localises to the virion. The protein resides in the host cytoplasm. Capsid protein VP2 self assembles to form an icosahedral capsid with a T=13 symmetry, about 70 nm in diameter, and consisting of 260 VP2 trimers. The capsid encapsulates the genomic dsRNA. VP2 is also involved in attachment and entry into the host cell by interacting with host ITGA4/ITGB1. In terms of biological role, the precursor of VP2 plays an important role in capsid assembly. First, pre-VP2 and VP2 oligomers assemble to form a procapsid. Then, the pre-VP2 intermediates may be processed into VP2 proteins by proteolytic cleavage mediated by VP4 to obtain the mature virion. The final capsid is composed of pentamers and hexamers but VP2 has a natural tendency to assemble into all-pentameric structures. Therefore pre-VP2 may be required to allow formation of the hexameric structures. Its function is as follows. Protease VP4 is a serine protease that cleaves the polyprotein into its final products. Pre-VP2 is first partially cleaved, and may be completely processed by VP4 upon capsid maturation. Functionally, capsid protein VP3 plays a key role in virion assembly by providing a scaffold for the capsid made of VP2. May self-assemble to form a T=4-like icosahedral inner-capsid composed of at least 180 trimers. Plays a role in genomic RNA packaging by recruiting VP1 into the capsid and interacting with the dsRNA genome segments to form a ribonucleoprotein complex. Additionally, the interaction of the VP3 C-terminal tail with VP1 removes the inherent structural blockade of the polymerase active site. Thus, VP3 can also function as a transcriptional activator. Structural peptide 1 is a small peptide derived from pre-VP2 C-terminus. It destabilizes and perforates cell membranes, suggesting a role during entry. In terms of biological role, structural peptide 2 is a small peptide derived from pVP2 C-terminus. It is not essential for the virus viability, but viral growth is affected when missing. Its function is as follows. Structural peptide 3 is a small peptide derived from pVP2 C-terminus. It is not essential for the virus viability, but viral growth is affected when missing. Functionally, structural peptide 4 is a small peptide derived from pVP2 C-terminus. It is essential for the virus viability. This is Structural polyprotein from Gallus gallus (Chicken).